The following is a 283-amino-acid chain: Glutamate racemase (283 aa).

Residues 7 to 8 (DS) and 39 to 40 (YG) contribute to the substrate site. The active-site Proton donor/acceptor is Cys70. 71-72 (NT) contributes to the substrate binding site. Catalysis depends on Cys206, which acts as the Proton donor/acceptor. Position 207–208 (207–208 (TH)) interacts with substrate.

The protein belongs to the aspartate/glutamate racemases family.

The catalysed reaction is L-glutamate = D-glutamate. It participates in cell wall biogenesis; peptidoglycan biosynthesis. In terms of biological role, provides the (R)-glutamate required for cell wall biosynthesis. This is Glutamate racemase from Caulobacter sp. (strain K31).